We begin with the raw amino-acid sequence, 132 residues long: Small ribosomal subunit protein uS8 (132 aa).

It belongs to the universal ribosomal protein uS8 family. Part of the 30S ribosomal subunit. Contacts proteins S5 and S12.

One of the primary rRNA binding proteins, it binds directly to 16S rRNA central domain where it helps coordinate assembly of the platform of the 30S subunit. The protein is Small ribosomal subunit protein uS8 of Macrococcus caseolyticus (strain JCSC5402) (Macrococcoides caseolyticum).